Consider the following 349-residue polypeptide: Ribosomal RNA small subunit methyltransferase H (349 aa).

Residues 34-36, Asp54, Phe81, Asp102, and Gln109 each bind S-adenosyl-L-methionine; that span reads GGH. Positions 328 to 349 are disordered; that stretch reads SRTGSVQHGQAKHKGVVQRGGS.

The protein belongs to the methyltransferase superfamily. RsmH family.

Its subcellular location is the cytoplasm. It carries out the reaction cytidine(1402) in 16S rRNA + S-adenosyl-L-methionine = N(4)-methylcytidine(1402) in 16S rRNA + S-adenosyl-L-homocysteine + H(+). Specifically methylates the N4 position of cytidine in position 1402 (C1402) of 16S rRNA. The polypeptide is Ribosomal RNA small subunit methyltransferase H (Dehalococcoides mccartyi (strain ATCC BAA-2100 / JCM 16839 / KCTC 5957 / BAV1)).